Reading from the N-terminus, the 878-residue chain is Alanine--tRNA ligase (878 aa).

Zn(2+)-binding residues include histidine 566, histidine 570, cysteine 668, and histidine 672.

Belongs to the class-II aminoacyl-tRNA synthetase family. Zn(2+) serves as cofactor.

Its subcellular location is the cytoplasm. The catalysed reaction is tRNA(Ala) + L-alanine + ATP = L-alanyl-tRNA(Ala) + AMP + diphosphate. In terms of biological role, catalyzes the attachment of alanine to tRNA(Ala) in a two-step reaction: alanine is first activated by ATP to form Ala-AMP and then transferred to the acceptor end of tRNA(Ala). Also edits incorrectly charged Ser-tRNA(Ala) and Gly-tRNA(Ala) via its editing domain. The protein is Alanine--tRNA ligase of Geobacillus thermodenitrificans (strain NG80-2).